A 119-amino-acid polypeptide reads, in one-letter code: Phosphoribosyl-AMP cyclohydrolase (119 aa).

A Mg(2+)-binding site is contributed by aspartate 77. Cysteine 78 lines the Zn(2+) pocket. The Mg(2+) site is built by aspartate 79 and aspartate 81. Residues cysteine 94 and cysteine 101 each coordinate Zn(2+).

This sequence belongs to the PRA-CH family. Homodimer. The cofactor is Mg(2+). Zn(2+) serves as cofactor.

The protein resides in the cytoplasm. The enzyme catalyses 1-(5-phospho-beta-D-ribosyl)-5'-AMP + H2O = 1-(5-phospho-beta-D-ribosyl)-5-[(5-phospho-beta-D-ribosylamino)methylideneamino]imidazole-4-carboxamide. It functions in the pathway amino-acid biosynthesis; L-histidine biosynthesis; L-histidine from 5-phospho-alpha-D-ribose 1-diphosphate: step 3/9. Its function is as follows. Catalyzes the hydrolysis of the adenine ring of phosphoribosyl-AMP. The polypeptide is Phosphoribosyl-AMP cyclohydrolase (Ruegeria pomeroyi (strain ATCC 700808 / DSM 15171 / DSS-3) (Silicibacter pomeroyi)).